A 300-amino-acid chain; its full sequence is tRNA dimethylallyltransferase (300 aa).

9–16 (GPTASGKS) is a binding site for ATP. 11–16 (TASGKS) contacts substrate. The tract at residues 34-37 (DSKQ) is interaction with substrate tRNA.

Belongs to the IPP transferase family. In terms of assembly, monomer. Mg(2+) is required as a cofactor.

It carries out the reaction adenosine(37) in tRNA + dimethylallyl diphosphate = N(6)-dimethylallyladenosine(37) in tRNA + diphosphate. Functionally, catalyzes the transfer of a dimethylallyl group onto the adenine at position 37 in tRNAs that read codons beginning with uridine, leading to the formation of N6-(dimethylallyl)adenosine (i(6)A). The polypeptide is tRNA dimethylallyltransferase (Ehrlichia canis (strain Jake)).